The sequence spans 158 residues: Small ribosomal subunit protein uS9 (158 aa).

The segment covering 1 to 10 has biased composition (polar residues); it reads MSDTMQSLDQ. A disordered region spans residues 1–35; that stretch reads MSDTMQSLDQLSALKTAAPDAPKREKKVDKQGRAY. Residues 21-32 show a composition bias toward basic and acidic residues; sequence APKREKKVDKQG.

The protein belongs to the universal ribosomal protein uS9 family.

The sequence is that of Small ribosomal subunit protein uS9 from Afipia carboxidovorans (strain ATCC 49405 / DSM 1227 / KCTC 32145 / OM5) (Oligotropha carboxidovorans).